The following is a 712-amino-acid chain: MTHLSPEAFAIIEGRHADPFRYLGQHNVDGQTIVRAFLPEASRVEVVGEHGEVAPLARIHDAGLFTGTMSSMQRYRLRATFGDSVTDLEDPYRFLPILGDFDLHLLGEGNHERLYDKLGAHPMVIDGVDGVGFVVLAPNARRVSVVGDFNFWNARRHPMRVRGNGYWELFIPRARAGDHYKFDIIGPQGEHLPLKSDPMAFAAEMRPKTASIVVDETRLPRPRPAPHDINKLNKPVSIYEVHLGSWRRKDNNQWLTYRELAEQLPAYARDMGFTHIEFLPINEHPFDGSWGYQPTGLYAPTSRFGSPEDFCALVDACHREGLAVWLDWVPGHFPDDPHGLGHFDGTALYEHANPMQGRHLDWGTLIYNYGRTEVANFLRSNALFWLERYGIDGLRVDAVASMLYLDYSRPSGGWIPNKYGGRENLEAIEFLRRTNIDVFGHFPQATTAAEESTAWPQVSRPVDTGGLGFGYKWNMGWMHDTLRYVSKDPIHRKYHHGEILFGLHYAFSENFILPLSHDEVVHGKRSILGRMPGDDWQRFANLRAYYSFMFGHPGKKLLFMGCELAQEREWNHDTSLDWHLLGDARYAGIQALIRDLNHLYRNQPALHERDCDPEGFEWLITDDADRNVFAWVRKGFDERAHCVVVVNFSPNVYYNYRVRAPLGGTWREVFNSDSSHYGGSNVGNVGQVHASEDQHLNLILPPMAAVFLVPEA.

Asp397 (nucleophile) is an active-site residue. Glu450 functions as the Proton donor in the catalytic mechanism.

This sequence belongs to the glycosyl hydrolase 13 family. GlgB subfamily. In terms of assembly, monomer.

It catalyses the reaction Transfers a segment of a (1-&gt;4)-alpha-D-glucan chain to a primary hydroxy group in a similar glucan chain.. Its pathway is glycan biosynthesis; glycogen biosynthesis. Its function is as follows. Catalyzes the formation of the alpha-1,6-glucosidic linkages in glycogen by scission of a 1,4-alpha-linked oligosaccharide from growing alpha-1,4-glucan chains and the subsequent attachment of the oligosaccharide to the alpha-1,6 position. The polypeptide is 1,4-alpha-glucan branching enzyme GlgB (Bradyrhizobium sp. (strain ORS 278)).